We begin with the raw amino-acid sequence, 83 residues long: Cytochrome b559 subunit alpha (83 aa).

A helical membrane pass occupies residues 22 to 36 (VIHSITIPALFIAGW). Residue His-24 coordinates heme.

It belongs to the PsbE/PsbF family. In terms of assembly, heterodimer of an alpha subunit and a beta subunit. PSII is composed of 1 copy each of membrane proteins PsbA, PsbB, PsbC, PsbD, PsbE, PsbF, PsbH, PsbI, PsbJ, PsbK, PsbL, PsbM, PsbT, PsbX, PsbY, PsbZ, Psb30/Ycf12, peripheral proteins PsbO, CyanoQ (PsbQ), PsbU, PsbV and a large number of cofactors. It forms dimeric complexes. Heme b is required as a cofactor.

It localises to the cellular thylakoid membrane. Functionally, this b-type cytochrome is tightly associated with the reaction center of photosystem II (PSII). PSII is a light-driven water:plastoquinone oxidoreductase that uses light energy to abstract electrons from H(2)O, generating O(2) and a proton gradient subsequently used for ATP formation. It consists of a core antenna complex that captures photons, and an electron transfer chain that converts photonic excitation into a charge separation. The sequence is that of Cytochrome b559 subunit alpha from Synechococcus elongatus (strain ATCC 33912 / PCC 7942 / FACHB-805) (Anacystis nidulans R2).